We begin with the raw amino-acid sequence, 189 residues long: Potassium-transporting ATPase KdpC subunit (189 aa).

The helical transmembrane segment at 5–25 (LLPALTMLLVFTVITGIVYPL) threads the bilayer.

This sequence belongs to the KdpC family. In terms of assembly, the system is composed of three essential subunits: KdpA, KdpB and KdpC.

It is found in the cell membrane. Functionally, part of the high-affinity ATP-driven potassium transport (or Kdp) system, which catalyzes the hydrolysis of ATP coupled with the electrogenic transport of potassium into the cytoplasm. This subunit acts as a catalytic chaperone that increases the ATP-binding affinity of the ATP-hydrolyzing subunit KdpB by the formation of a transient KdpB/KdpC/ATP ternary complex. The chain is Potassium-transporting ATPase KdpC subunit from Mycobacterium bovis (strain ATCC BAA-935 / AF2122/97).